Here is a 474-residue protein sequence, read N- to C-terminus: Probable protein phosphatase 2C 37 (474 aa).

Residues 1–90 (MVMASAGVNM…RDDDGCSSTA (90 aa)) form a disordered region. Residues 57–77 (LPASSASPSPSPTSSAASSDC) show a composition bias toward low complexity. The PPM-type phosphatase domain occupies 113 to 470 (AFGSVSLAGR…DNISVVVIDL (358 aa)). The Mn(2+) site is built by Asp152, Gly153, and Asp387. The tract at residues 406–434 (LEDGSPTSGRRAARSGEAASSSAGAPAAA) is disordered. A compositionally biased stretch (low complexity) spans 420-434 (SGEAASSSAGAPAAA). Asp461 is a binding site for Mn(2+).

The protein belongs to the PP2C family. Mg(2+) is required as a cofactor. The cofactor is Mn(2+).

It catalyses the reaction O-phospho-L-seryl-[protein] + H2O = L-seryl-[protein] + phosphate. The catalysed reaction is O-phospho-L-threonyl-[protein] + H2O = L-threonyl-[protein] + phosphate. This is Probable protein phosphatase 2C 37 from Oryza sativa subsp. japonica (Rice).